Consider the following 1411-residue polypeptide: Protein RhsB (1411 aa).

28 tandem repeats follow at residues 330–352 (GKQV…HRHT), 353–374 (GRPE…LNPA), 375–417 (GLSY…EHAD), 418–438 (GSVT…TDAA), 439–460 (GRTT…TTPD), 461–481 (GRAS…TGPD), 482–502 (GLEL…TAPD), 503–525 (GDIT…EDAT), 526–546 (GSRK…TDCS), 547–567 (GYVT…HREE), 568–588 (GLSQ…KDTQ), 589–609 (GHET…IAPD), 610–629 (GSRN…TTQG), 630–650 (GLTR…TSEN), 651–671 (GSHT…TGFD), 672–691 (GRTQ…SEDE), 692–711 (GLVT…RTVK), 712–734 (GETA…HISE), 735–758 (GHRV…QTVH), 808–828 (GDTP…LRSF), 829–850 (GRYE…HLNS), 851–871 (LLSD…ISSP), 872–894 (RQTR…TAAN), 895–930 (LDIR…NRIA), 931–959 (RDAH…VIRT), 960–984 (DDER…TQYE), 985–1019 (EPLV…MSLS), and 1162–1186 (GATA…HQLQ). A 28 X approximate tandem repeats region spans residues 330-1186 (GKQVRSFTYD…LNEENPHQLQ (857 aa)).

Belongs to the RHS family.

Its function is as follows. Rhs elements have a nonessential function. They may play an important role in the natural ecology of the cell. In Escherichia coli (strain K12), this protein is Protein RhsB (rhsB).